An 809-amino-acid polypeptide reads, in one-letter code: AP-3 complex subunit beta (809 aa).

5 HEAT repeats span residues 37 to 76, 112 to 151, 153 to 186, 187 to 224, and 524 to 561; these read YYSQ…DDDS, DPNL…SSLA, IILH…AGKN, DYHE…DHLE, and KICP…YDID. Ser693, Ser698, Ser724, and Ser726 each carry phosphoserine. Disordered stretches follow at residues 708–739 and 763–809; these read FTSS…FTSQ and PRKI…HLEL. Over residues 722-739 the composition is skewed to polar residues; the sequence is GDSNSISGKGNVNTFTSQ. A compositionally biased stretch (acidic residues) spans 772–791; it reads ESSDEDEDESEESSDDDEYS. Positions 792-809 are enriched in low complexity; the sequence is DSSLGTSSSGTSSSHLEL.

The protein belongs to the adaptor complexes large subunit family. As to quaternary structure, adaptor protein complex 3 (AP-3) is a heterotetramer composed of 2 large adaptins (APL5 and APL6), a medium adaptin (APM3) and a small adaptin (APS3). Post-translationally, pyrophosphorylated by 5-diphosphoinositol pentakisphosphate (5-IP7). Serine pyrophosphorylation is achieved by Mg(2+)-dependent, but enzyme independent transfer of a beta-phosphate from a inositol pyrophosphate to a pre-phosphorylated serine residue.

The protein resides in the golgi apparatus. It localises to the cytoplasmic vesicle. Its subcellular location is the clathrin-coated vesicle membrane. In terms of biological role, part of the AP-3 complex, an adaptor-related complex which is not clathrin-associated. The complex is associated with the Golgi region as well as more peripheral structures. It facilitates the budding of vesicles from the Golgi membrane and may be directly involved in trafficking to the vacuole. Required for the transport via the ALP pathway, which directs the transport of the cargo proteins PHO8 and VAM3 to the vacuole. The sequence is that of AP-3 complex subunit beta (APL6) from Saccharomyces cerevisiae (strain ATCC 204508 / S288c) (Baker's yeast).